Here is a 65-residue protein sequence, read N- to C-terminus: Large ribosomal subunit protein bL32 (65 aa).

The protein belongs to the bacterial ribosomal protein bL32 family.

The polypeptide is Large ribosomal subunit protein bL32 (Tropheryma whipplei (strain TW08/27) (Whipple's bacillus)).